Here is a 79-residue protein sequence, read N- to C-terminus: ATP synthase subunit c (79 aa).

2 helical membrane passes run 11–31 and 53–73; these read IAVAIMVGLASIGAAIGIGIL and FFVVMGLVDAIPMIAVGLGLY.

This sequence belongs to the ATPase C chain family. F-type ATPases have 2 components, F(1) - the catalytic core - and F(0) - the membrane proton channel. F(1) has five subunits: alpha(3), beta(3), gamma(1), delta(1), epsilon(1). F(0) has three main subunits: a(1), b(2) and c(10-14). The alpha and beta chains form an alternating ring which encloses part of the gamma chain. F(1) is attached to F(0) by a central stalk formed by the gamma and epsilon chains, while a peripheral stalk is formed by the delta and b chains.

It is found in the cell membrane. Its function is as follows. F(1)F(0) ATP synthase produces ATP from ADP in the presence of a proton or sodium gradient. F-type ATPases consist of two structural domains, F(1) containing the extramembraneous catalytic core and F(0) containing the membrane proton channel, linked together by a central stalk and a peripheral stalk. During catalysis, ATP synthesis in the catalytic domain of F(1) is coupled via a rotary mechanism of the central stalk subunits to proton translocation. In terms of biological role, key component of the F(0) channel; it plays a direct role in translocation across the membrane. A homomeric c-ring of between 10-14 subunits forms the central stalk rotor element with the F(1) delta and epsilon subunits. The protein is ATP synthase subunit c of Buchnera aphidicola subsp. Acyrthosiphon pisum (strain 5A).